A 770-amino-acid polypeptide reads, in one-letter code: Signal transducer and activator of transcription 3 (770 aa).

Ala2 bears the N-acetylalanine mark. Residues Lys49 and Lys87 each carry the N6-acetyllysine modification. The Essential for nuclear import signature appears at 150–162; it reads DVRKRVQDLEQKM. The region spanning 580–670 is the SH2 domain; the sequence is WNEGYIMGFI…DATNILVSPL (91 aa). Allysine; alternate occurs at positions 601, 615, and 631. N6-acetyllysine; alternate is present on residues Lys601, Lys615, and Lys631. Tyr640 is modified (phosphotyrosine; by TYK2). Residue Lys685 is modified to Allysine; alternate. Lys685 carries the N6-acetyllysine; alternate modification. Tyr705 carries the phosphotyrosine; by FER and PTK6 modification. Lys707 bears the N6-acetyllysine mark. At Thr714 the chain carries Phosphothreonine. Ser727 bears the Phosphoserine; by DYRK2, NLK, NEK6, IRAK1, RPS6KA5, ZIPK/DAPK3 and PKC/PRKCE mark.

Belongs to the transcription factor STAT family. Forms a homodimer or a heterodimer with a related family member (at least STAT1). Component of a promoter-binding complex composed of STAT3, NFATC3 and NFATC4; complex formation is enhanced by calcineurin. Interacts with IL31RA, NCOA1, PELP1, SIPAR, SOCS7, STATIP1 and TMF1. Interacts with IL23R in presence of IL23. Interacts (via SH2 domain) with NLK. Interacts with ARL2BP; the interaction is enhanced by LIF and JAK1 expression. Interacts with KPNA4 and KPNA5; KPNA4 may be the primary mediator of nuclear import. Interacts with CAV2; the interaction is increased on insulin-induced tyrosine phosphorylation of CAV2 and leads to STAT3 activation. Interacts with ARL2BP; interaction is enhanced with ARL2. Interacts with NEK6. Binds to CDK9 when activated and nuclear. Interacts with BMX. Interacts with ZIPK/DAPK3. Interacts with PIAS3; the interaction occurs on stimulation by IL6, CNTF or OSM and inhibits the DNA binding activity of STAT3. In prostate cancer cells, interacts with PRKCE and promotes DNA binding activity of STAT3. Interacts with STMN3, antagonizing its microtubule-destabilizing activity. Interacts with the 'Lys-129' acetylated form of BIRC5/survivin. Interacts with FER. Interacts (via SH2 domain) with EIF2AK2/PKR (via the kinase catalytic domain). Interacts with FGFR4. Interacts with INPP5F; the interaction is independent of STAT3 Tyr-705 phosphorylation status. Interacts with OCIAD1 and OCIAD2. Interacts (unphosphorylated or phosphorylated at Ser-727) with PHB1. Interacts and may form heterodimers with NHLH1. Found in a complex with SLC39A6, SLC39A10 and with the 'Ser-727' phosphorylated form of STAT3 throughout mitosis. Interacts (when acetylated) with EP300 (via bromo domain); interaction takes place following STAT3 acetylation by EP300 and promotes enhanceosome assembly. Interacts (when acetylated) with BRD2 (via bromo domain); interaction promotes STAT3 recruitment to chromatin and T-helper Th17 cell differentiation. Interacts with FAM220A/SIPAR; the interaction occurs in both the nucleus and the cytoplasm, is enhanced by IL6 and promotes STAT3 dephosphorylation. Interacts in both unphosphorylated and phosphorylated forms with FAM220A but interacts preferentially in the phosphorylated form in the nucleus. Interacts with PTPN2; the interaction is promoted by FAM220A and leads to STAT3 dephosphorylation which negatively regulates STAT3 transcriptional activator activity. Post-translationally, activated through tyrosine phosphorylation by BMX. Tyrosine phosphorylated in response to IL-6, IL-11, CNTF, LIF, CSF-1, EGF, PDGF, IFN-alpha and OSM. Tyrosine phosphorylated in response to constitutively activated FGFR1, FGFR2, FGFR3 and FGFR4. Phosphorylated on serine upon DNA damage, probably by ATM or ATR. Serine phosphorylation is important for the formation of stable DNA-binding STAT3 homodimers and maximal transcriptional activity. ARL2BP may participate in keeping the phosphorylated state of STAT3 within the nucleus. Tyrosine phosphorylated upon stimulation with EGF. Upon LPS challenge, phosphorylated within the nucleus by IRAK1. Phosphorylated on Ser-727 by RPS6KA5. Dephosphorylation on tyrosine residues by PTPN2 negatively regulates IL6/interleukin-6 signaling. Phosphorylation at Tyr-705 by FER, isoform M2 of PKM (PKM2) or PTK6 leads to an increase of its transcriptional activity. Phosphorylation at Tyr-705 is increased in the presence of calcineurin. Phosphorylation at Tyr-640 by TYK2 negatively regulates transcriptional activity. In terms of processing, acetylated on lysine residues by EP300/p300, promoting its activation. Acetylation at Lys-49 and Lys-87 by EP300/p300 promotes its activation. Acetylation at Lys-87 by EP300/p300 promotes its association with BRD2 and recruitment to chromatin. Deacetylated at Lys-49 and Lys-87 by HDAC1. Acetylation at Lys-685 by EP300/p300 promotes its homodimerization and activation. Deacetylated at Lys-685 by HDAC3. Acetylated on lysine residues by CREBBP. Deacetylation by LOXL3 leads to disrupt STAT3 dimerization and inhibit STAT3 transcription activity. Oxidation of lysine residues to allysine on STAT3 preferentially takes place on lysine residues that are acetylated. Some lysine residues are oxidized to allysine by LOXL3, leading to disrupt STAT3 dimerization and inhibit STAT3 transcription activity. Oxidation of lysine residues to allysine on STAT3 preferentially takes place on lysine residues that are acetylated.

It is found in the cytoplasm. It localises to the nucleus. Functionally, signal transducer and transcription activator that mediates cellular responses to interleukins, KITLG/SCF, LEP and other growth factors. Once activated, recruits coactivators, such as NCOA1 or MED1, to the promoter region of the target gene. May mediate cellular responses to activated FGFR1, FGFR2, FGFR3 and FGFR4. Upon activation of IL6ST/gp130 signaling by interleukin-6 (IL6), binds to the IL6-responsive elements identified in the promoters of various acute-phase protein genes. Activated by IL31 through IL31RA. Acts as a regulator of inflammatory response by regulating differentiation of naive CD4(+) T-cells into T-helper Th17 or regulatory T-cells (Treg): acetylation promotes its transcription activity and cell differentiation while deacetylation and oxidation of lysine residues by LOXL3 inhibits differentiation. Involved in cell cycle regulation by inducing the expression of key genes for the progression from G1 to S phase, such as CCND1. Mediates the effects of LEP on melanocortin production, body energy homeostasis and lactation. May play an apoptotic role by transctivating BIRC5 expression under LEP activation. Cytoplasmic STAT3 represses macroautophagy by inhibiting EIF2AK2/PKR activity. Plays a crucial role in basal beta cell functions, such as regulation of insulin secretion. Following JAK/STAT signaling activation and as part of a complex with NFATC3 and NFATC4, binds to the alpha-beta E4 promoter region of CRYAB and activates transcription in cardiomyocytes. Plays an important role in host defense in methicillin-resistant S.aureus lung infection by regulating the expression of the antimicrobial lectin REG3G. In Bos taurus (Bovine), this protein is Signal transducer and activator of transcription 3 (STAT3).